We begin with the raw amino-acid sequence, 199 residues long: Fe/S biogenesis protein NfuA (199 aa).

Residues C156 and C159 each coordinate [4Fe-4S] cluster.

This sequence belongs to the NfuA family. In terms of assembly, homodimer. It depends on [4Fe-4S] cluster as a cofactor.

In terms of biological role, involved in iron-sulfur cluster biogenesis. Binds a 4Fe-4S cluster, can transfer this cluster to apoproteins, and thereby intervenes in the maturation of Fe/S proteins. Could also act as a scaffold/chaperone for damaged Fe/S proteins. The polypeptide is Fe/S biogenesis protein NfuA (Haemophilus ducreyi (strain 35000HP / ATCC 700724)).